The primary structure comprises 395 residues: MKKKLSYMITIMLAFTLSLALGLFFNSAHADSLPQKNGANQKTTKVTVSNKDVPDAVRKLAEEQYLSRVALLDKASNHKATSYTLGEPFKIYKFNKESDGNYYYPVLNKKGDVVYVVTISPNPSNSKASKQQNNYSINVSPFLSKILNQYKNQKITILTNTKGYFALTEDGKVTLVLKTPRNNEKTYENATESTKPKDLNDFKQTASVTKPTLEYQSTRNEMYAEYVNQLKNFRIRETQGYNSWCAGYTMSALLNATYNTNRYNAESVMRYLHPNLRGHDFQFTGLTSNEMLRFGRSQGRNTQYLNRMTSYNEVDQLTTNNQGIAVLGKRVESSDGIHAGHAMAVAGNAKVNNGQKVILIWNPWDNGLMTQDAHSNIIPVSNGDHYEWYASIYGY.

A signal peptide spans 1–30 (MKKKLSYMITIMLAFTLSLALGLFFNSAHA). The propeptide occupies 31-221 (DSLPQKNGAN…TLEYQSTRNE (191 aa)). Catalysis depends on residues cysteine 245, histidine 341, and asparagine 362.

Belongs to the peptidase C47 family. Proteolytically cleaved.

It is found in the secreted. Its subcellular location is the cell wall. Cysteine protease able to cleave elastin, insulin, myoglobin, fibronectin, fibrinogen, HMW-kininogen, alpha-1-protease inhibitor and alpha-1-antitrypsin. Along with other extracellular proteases may contribute to the colonization and infection of human tissues. This chain is Extracellular cysteine protease (ecpA), found in Staphylococcus epidermidis (strain ATCC 35984 / DSM 28319 / BCRC 17069 / CCUG 31568 / BM 3577 / RP62A).